The primary structure comprises 397 residues: Probable N-succinyldiaminopimelate aminotransferase DapC (397 aa).

Pyridoxal 5'-phosphate is bound by residues 109–110 and 218–222; these read GS and DGMAE. The residue at position 232 (lysine 232) is an N6-(pyridoxal phosphate)lysine.

This sequence belongs to the class-III pyridoxal-phosphate-dependent aminotransferase family. In terms of assembly, homodimer. Pyridoxal 5'-phosphate serves as cofactor.

It is found in the cytoplasm. The catalysed reaction is N-succinyl-(2S,6S)-2,6-diaminopimelate + 2-oxoglutarate = (S)-2-succinylamino-6-oxoheptanedioate + L-glutamate. It functions in the pathway amino-acid biosynthesis; L-lysine biosynthesis via DAP pathway; LL-2,6-diaminopimelate from (S)-tetrahydrodipicolinate (succinylase route): step 2/3. Its function is as follows. Involved in the lysine biosynthetic pathways. It catalyzes the transfer of an amino group from L-glutamate to N-succinyl-2-l-amino-6-oxoheptanedioate (N-succinyl-2-l-amino-6-ketopimelate) in a PLP-dependent reaction, yielding as products N-succinyl-l-2,6-diaminoheptanedioate (N-succinyl-diaminopimelate) and 2-oxoglutarate. This Mycobacterium tuberculosis (strain CDC 1551 / Oshkosh) protein is Probable N-succinyldiaminopimelate aminotransferase DapC (dapC).